Consider the following 347-residue polypeptide: Large ribosomal subunit protein uL3 (347 aa).

Belongs to the universal ribosomal protein uL3 family. In terms of assembly, part of the 50S ribosomal subunit. Forms a cluster with proteins L14 and L24e.

Functionally, one of the primary rRNA binding proteins, it binds directly near the 3'-end of the 23S rRNA, where it nucleates assembly of the 50S subunit. This Caldivirga maquilingensis (strain ATCC 700844 / DSM 13496 / JCM 10307 / IC-167) protein is Large ribosomal subunit protein uL3.